The following is a 633-amino-acid chain: MFHGTITKELTSHEEWSHYNENIIEDQKDFVFVKYSGLHLKSMENLQTCISLRVCIFSNNFLTDIQPLQSCKKLIKLDLHGNQIKTLPDKNFWSGLKNLKLLYLHDNGFSKLKNICVLSGCVSLIGLTMFDCPVSLKKGYRHVLVNSIWPLKALDHHVISDEEIIQNWRLPERFKTFSPSLFFNLYPALIKGTTYEDEIKNIKHIISRINEILAHNSPVLIIQRWIRGFIVRKHLSPYFKHKKHYHGKMIRVLETKLICIGRSDEDKYLEDFFFIKPECNIKGKVAHWKQMRYSPADFKYSTEYGKHISCLSYELKTKYIDGKSKQPRHHIHKGQKAMKAESEDEEVDTEFRISAMKIPLYSSRSLKYGAMLKEMKWDYFPQYLQPFPATRQKPPVKRETLWKLKKRREFLATQRAGMKLHMFDDVDKYYSEQKQHEEEARKFAAMVTAQVTQERASVNIREKLNKKIYMTRKLMEKDNETIQKGLQQIWRERLAYLEKVRERKFMFLAEKKLNAADQSLVISLNNERSILLKGITQVERLKKHMSEKKAKHLDVIEKWEEQKYKQDLLMEMKKLRVEEIQKRHCEEKFVIDTLILQKGYERLEEAKAKVEYIKTFYTSKSHKRRNEAMPDHI.

3 LRR repeats span residues 51–72 (SLRVCIFSNNFLTDIQPLQSCK), 73–94 (KLIKLDLHGNQIKTLPDKNFWS), and 98–119 (NLKLLYLHDNGFSKLKNICVLS). Residues 132–179 (CPVSLKKGYRHVLVNSIWPLKALDHHVISDEEIIQNWRLPERFKTFSP) enclose the LRRCT domain. The IQ domain occupies 215–244 (HNSPVLIIQRWIRGFIVRKHLSPYFKHKKH). The disordered stretch occupies residues 324 to 343 (SKQPRHHIHKGQKAMKAESE). The span at 325 to 336 (KQPRHHIHKGQK) shows a compositional bias: basic residues. Positions 556 to 617 (IEKWEEQKYK…AKVEYIKTFY (62 aa)) form a coiled coil.

In Mus musculus (Mouse), this protein is Leucine-rich repeat and IQ domain-containing protein 3 (Lrriq3).